The chain runs to 258 residues: Thiazole synthase (258 aa).

Lys98 serves as the catalytic Schiff-base intermediate with DXP. 1-deoxy-D-xylulose 5-phosphate contacts are provided by residues Gly159, 185 to 186 (AG), and 207 to 208 (NT).

This sequence belongs to the ThiG family. In terms of assembly, homotetramer. Forms heterodimers with either ThiH or ThiS.

The protein resides in the cytoplasm. It carries out the reaction [ThiS sulfur-carrier protein]-C-terminal-Gly-aminoethanethioate + 2-iminoacetate + 1-deoxy-D-xylulose 5-phosphate = [ThiS sulfur-carrier protein]-C-terminal Gly-Gly + 2-[(2R,5Z)-2-carboxy-4-methylthiazol-5(2H)-ylidene]ethyl phosphate + 2 H2O + H(+). The protein operates within cofactor biosynthesis; thiamine diphosphate biosynthesis. Catalyzes the rearrangement of 1-deoxy-D-xylulose 5-phosphate (DXP) to produce the thiazole phosphate moiety of thiamine. Sulfur is provided by the thiocarboxylate moiety of the carrier protein ThiS. In vitro, sulfur can be provided by H(2)S. In Bacillus thuringiensis subsp. konkukian (strain 97-27), this protein is Thiazole synthase.